A 599-amino-acid polypeptide reads, in one-letter code: Flap endonuclease GEN-like 1 (599 aa).

Residues Met1–Ile96 form an N-domain region. The tract at residues Gly2–Gly95 is XPG-N domain. Asp31, Asp75, Glu140, Glu142, Asp161, Asp163, and Asp213 together coordinate Mg(2+). An XPG-I domain region spans residues Glu128–Asp213. Positions Glu128 to Gly217 are I-domain. The tract at residues Asp213 to Leu407 is 5'-3' exonuclease domain. Disordered stretches follow at residues Arg522–Gln545 and Ala559–Gly599. 2 stretches are compositionally biased toward polar residues: residues Ser563–Ala572 and Ala580–Lys590.

The protein belongs to the XPG/RAD2 endonuclease family. GEN subfamily. Mg(2+) is required as a cofactor.

It is found in the nucleus. Functionally, endonuclease which cleaves flap structures at the junction between single-stranded DNA and double-stranded DNA with a specific cleavage site in the 5' overhang strand exactly one nucleotide 3' of the branch point. Structure- and sequence-specific nuclease that resolves holliday junctions (HJs) by symmetrically oriented incisions in two opposing strands near the junction point, thus leading to ligatable products; HJs are physical links between homologous DNA molecules that arise as central intermediary structures during homologous recombination and repair in meiotic and somatic cells. Structure-specific nuclease with 5'-flap endonuclease activity, preferentially cleaving static flaps 5' overhang strand exactly one nucleotide in the 3' direction of the branch point. Also able to cleave double-stranded flap strand 1 exactly at the branch point. This is Flap endonuclease GEN-like 1 from Arabidopsis thaliana (Mouse-ear cress).